The chain runs to 594 residues: Aspartate--tRNA(Asp/Asn) ligase (594 aa).

Glu175 contacts L-aspartate. Residues 199-202 (QIYK) form an aspartate region. Residues Arg221 and His454 each coordinate L-aspartate. Residue 221 to 223 (RDE) participates in ATP binding. An ATP-binding site is contributed by Glu488. Arg495 contributes to the L-aspartate binding site. 540-543 (GIDR) serves as a coordination point for ATP.

Belongs to the class-II aminoacyl-tRNA synthetase family. Type 1 subfamily. Homodimer.

The protein resides in the cytoplasm. The catalysed reaction is tRNA(Asx) + L-aspartate + ATP = L-aspartyl-tRNA(Asx) + AMP + diphosphate. Its function is as follows. Aspartyl-tRNA synthetase with relaxed tRNA specificity since it is able to aspartylate not only its cognate tRNA(Asp) but also tRNA(Asn). Reaction proceeds in two steps: L-aspartate is first activated by ATP to form Asp-AMP and then transferred to the acceptor end of tRNA(Asp/Asn). This is Aspartate--tRNA(Asp/Asn) ligase from Chelativorans sp. (strain BNC1).